Here is a 430-residue protein sequence, read N- to C-terminus: ATP-dependent RNA helicase RhlB (430 aa).

The short motif at 9-37 (QKFSDFALHPQVIEALETKGFHNCTPIQA) is the Q motif element. Positions 40-219 (LPFTLSGRDV…FENMNNAEYV (180 aa)) constitute a Helicase ATP-binding domain. 53–60 (AQTGTGKT) is an ATP binding site. The DEAD box signature appears at 165–168 (DEAD). One can recognise a Helicase C-terminal domain in the interval 245-390 (RLLQTLIEEE…VSRYNSDALM (146 aa)). The segment at 388-430 (ALMTDLPPPKRLTRNRSGNGPRRGGNNNRRSSASRSPNRKRSG) is disordered. Over residues 402-423 (NRSGNGPRRGGNNNRRSSASRS) the composition is skewed to low complexity.

This sequence belongs to the DEAD box helicase family. RhlB subfamily. Component of the RNA degradosome, which is a multiprotein complex involved in RNA processing and mRNA degradation.

Its subcellular location is the cytoplasm. It catalyses the reaction ATP + H2O = ADP + phosphate + H(+). DEAD-box RNA helicase involved in RNA degradation. Has RNA-dependent ATPase activity and unwinds double-stranded RNA. This is ATP-dependent RNA helicase RhlB from Erwinia tasmaniensis (strain DSM 17950 / CFBP 7177 / CIP 109463 / NCPPB 4357 / Et1/99).